Reading from the N-terminus, the 403-residue chain is Phosphopentomutase (403 aa).

6 residues coordinate Mn(2+): Asp13, Asp298, His303, Asp339, His340, and His351.

It belongs to the phosphopentomutase family. The cofactor is Mn(2+).

Its subcellular location is the cytoplasm. The enzyme catalyses 2-deoxy-alpha-D-ribose 1-phosphate = 2-deoxy-D-ribose 5-phosphate. It catalyses the reaction alpha-D-ribose 1-phosphate = D-ribose 5-phosphate. Its pathway is carbohydrate degradation; 2-deoxy-D-ribose 1-phosphate degradation; D-glyceraldehyde 3-phosphate and acetaldehyde from 2-deoxy-alpha-D-ribose 1-phosphate: step 1/2. Its function is as follows. Isomerase that catalyzes the conversion of deoxy-ribose 1-phosphate (dRib-1-P) and ribose 1-phosphate (Rib-1-P) to deoxy-ribose 5-phosphate (dRib-5-P) and ribose 5-phosphate (Rib-5-P), respectively. This Streptococcus pneumoniae (strain Hungary19A-6) protein is Phosphopentomutase.